The following is a 201-amino-acid chain: Imidazole glycerol phosphate synthase subunit HisH 1 (201 aa).

The 201-residue stretch at 1-201 (MIALIDYKAG…LKLLENFIRL (201 aa)) folds into the Glutamine amidotransferase type-1 domain. Cysteine 80 serves as the catalytic Nucleophile. Residues histidine 183 and glutamate 185 contribute to the active site.

Heterodimer of HisH and HisF.

Its subcellular location is the cytoplasm. The catalysed reaction is 5-[(5-phospho-1-deoxy-D-ribulos-1-ylimino)methylamino]-1-(5-phospho-beta-D-ribosyl)imidazole-4-carboxamide + L-glutamine = D-erythro-1-(imidazol-4-yl)glycerol 3-phosphate + 5-amino-1-(5-phospho-beta-D-ribosyl)imidazole-4-carboxamide + L-glutamate + H(+). It carries out the reaction L-glutamine + H2O = L-glutamate + NH4(+). The protein operates within amino-acid biosynthesis; L-histidine biosynthesis; L-histidine from 5-phospho-alpha-D-ribose 1-diphosphate: step 5/9. Functionally, IGPS catalyzes the conversion of PRFAR and glutamine to IGP, AICAR and glutamate. The HisH subunit provides the glutamine amidotransferase activity that produces the ammonia necessary to HisF for the synthesis of IGP and AICAR. This is Imidazole glycerol phosphate synthase subunit HisH 1 from Campylobacter jejuni (strain RM1221).